A 397-amino-acid chain; its full sequence is Elongation factor Tu (397 aa).

Positions 10-206 (KPHVNIGTIG…AVDESIPEPQ (197 aa)) constitute a tr-type G domain. A G1 region spans residues 19–26 (GHIDHGKT). A GTP-binding site is contributed by 19 to 26 (GHIDHGKT). Mg(2+) is bound at residue threonine 26. The segment at 62–66 (GITIS) is G2. Positions 83 to 86 (DCPG) are G3. Residues 83-87 (DCPGH) and 138-141 (NKAD) contribute to the GTP site. The segment at 138-141 (NKAD) is G4. Positions 176–178 (SAL) are G5.

The protein belongs to the TRAFAC class translation factor GTPase superfamily. Classic translation factor GTPase family. EF-Tu/EF-1A subfamily. Monomer.

The protein localises to the cytoplasm. The catalysed reaction is GTP + H2O = GDP + phosphate + H(+). Its function is as follows. GTP hydrolase that promotes the GTP-dependent binding of aminoacyl-tRNA to the A-site of ribosomes during protein biosynthesis. This chain is Elongation factor Tu, found in Frankia casuarinae (strain DSM 45818 / CECT 9043 / HFP020203 / CcI3).